The primary structure comprises 395 residues: Glutamyl-tRNA reductase (395 aa).

Substrate contacts are provided by residues 45–48 (TCNR), Ser87, 92–94 (EDQ), and Gln98. Residue Cys46 is the Nucleophile of the active site. 167-172 (GAGEMG) provides a ligand contact to NADP(+).

The protein belongs to the glutamyl-tRNA reductase family. Homodimer.

It carries out the reaction (S)-4-amino-5-oxopentanoate + tRNA(Glu) + NADP(+) = L-glutamyl-tRNA(Glu) + NADPH + H(+). Its pathway is porphyrin-containing compound metabolism; protoporphyrin-IX biosynthesis; 5-aminolevulinate from L-glutamyl-tRNA(Glu): step 1/2. In terms of biological role, catalyzes the NADPH-dependent reduction of glutamyl-tRNA(Glu) to glutamate 1-semialdehyde (GSA). The polypeptide is Glutamyl-tRNA reductase (Methanosphaera stadtmanae (strain ATCC 43021 / DSM 3091 / JCM 11832 / MCB-3)).